Consider the following 526-residue polypeptide: 3-hydroxy-3-methylglutaryl-coenzyme A reductase 2 (526 aa).

Active-site charge relay system residues include Glu-193, Lys-325, and Asp-401. His-499 (proton donor) is an active-site residue. Residues 503–526 (NRKTEAPAPQADTISMTHNLPHSD) form a disordered region. Positions 514-526 (DTISMTHNLPHSD) are enriched in polar residues.

It belongs to the HMG-CoA reductase family.

It catalyses the reaction (R)-mevalonate + 2 NADP(+) + CoA = (3S)-3-hydroxy-3-methylglutaryl-CoA + 2 NADPH + 2 H(+). The protein operates within metabolic intermediate biosynthesis; (R)-mevalonate biosynthesis; (R)-mevalonate from acetyl-CoA: step 3/3. This transmembrane glycoprotein is involved in the control of cholesterol biosynthesis. It is the rate-limiting enzyme of the sterol biosynthesis. The polypeptide is 3-hydroxy-3-methylglutaryl-coenzyme A reductase 2 (hmgB) (Dictyostelium discoideum (Social amoeba)).